The chain runs to 91 residues: Putative pterin-4-alpha-carbinolamine dehydratase (91 aa).

This sequence belongs to the pterin-4-alpha-carbinolamine dehydratase family.

It catalyses the reaction (4aS,6R)-4a-hydroxy-L-erythro-5,6,7,8-tetrahydrobiopterin = (6R)-L-erythro-6,7-dihydrobiopterin + H2O. The polypeptide is Putative pterin-4-alpha-carbinolamine dehydratase (Sulfolobus acidocaldarius (strain ATCC 33909 / DSM 639 / JCM 8929 / NBRC 15157 / NCIMB 11770)).